The sequence spans 377 residues: Succinyl-diaminopimelate desuccinylase (377 aa).

H68 contributes to the Zn(2+) binding site. The active site involves D70. D101 lines the Zn(2+) pocket. The active-site Proton acceptor is E135. Positions 136, 164, and 350 each coordinate Zn(2+).

This sequence belongs to the peptidase M20A family. DapE subfamily. In terms of assembly, homodimer. The cofactor is Zn(2+). Co(2+) is required as a cofactor.

The enzyme catalyses N-succinyl-(2S,6S)-2,6-diaminopimelate + H2O = (2S,6S)-2,6-diaminopimelate + succinate. Its pathway is amino-acid biosynthesis; L-lysine biosynthesis via DAP pathway; LL-2,6-diaminopimelate from (S)-tetrahydrodipicolinate (succinylase route): step 3/3. In terms of biological role, catalyzes the hydrolysis of N-succinyl-L,L-diaminopimelic acid (SDAP), forming succinate and LL-2,6-diaminopimelate (DAP), an intermediate involved in the bacterial biosynthesis of lysine and meso-diaminopimelic acid, an essential component of bacterial cell walls. The polypeptide is Succinyl-diaminopimelate desuccinylase (Acinetobacter baumannii (strain SDF)).